Consider the following 417-residue polypeptide: Solute carrier family 25 member 46-A (417 aa).

Positions 1–13 are enriched in basic and acidic residues; the sequence is MQPRRPDRFDGLE. Residues 1–90 are disordered; the sequence is MQPRRPDRFD…AFGEENSNSA (90 aa). Positions 31-41 are enriched in low complexity; sequence SSFPARSFSSS. Residues 95–186 form a Solcar 1 repeat; that stretch reads QLNRFAGFGI…GILSEFTHLP (92 aa). 6 consecutive transmembrane segments (helical) span residues 102–122, 162–182, 198–218, 257–277, 313–333, and 382–402; these read FGIG…CIVL, MGST…LSEF, IGGH…FYSA, LLPL…HYIV, FPEL…LYPL, and LGFY…AIVL. The stretch at 310 to 415 is one Solcar 2 repeat; that stretch reads EDYFPELIAN…KIIYSSVVQT (106 aa).

It belongs to the mitochondrial carrier (TC 2.A.29) family.

The protein resides in the mitochondrion outer membrane. Functionally, may play a role in mitochondrial dynamics by controlling mitochondrial membrane fission. The protein is Solute carrier family 25 member 46-A (slc25a46-a) of Xenopus laevis (African clawed frog).